The primary structure comprises 127 residues: MNFDRTFLTFLGVIMLVHLHIFFAFLSLALLVIRGAMQLNGKNWRSIKLLKILPHLSDTLLIVSGVVILYLFAFGIEWWLVAKFALLILYIVFAAKFFSKKVSQPKSIFFWLACVSFIGAMLIAYLK.

4 consecutive transmembrane segments (helical) span residues 13-33, 61-81, 82-102, and 107-127; these read VIMLVHLHIFFAFLSLALLVI, LIVSGVVILYLFAFGIEWWLV, AKFALLILYIVFAAKFFSKKV, and SIFFWLACVSFIGAMLIAYLK.

Belongs to the SirB2 family.

It is found in the cell inner membrane. The protein is Protein HI_1253 of Haemophilus influenzae (strain ATCC 51907 / DSM 11121 / KW20 / Rd).